The following is a 428-amino-acid chain: Histidine--tRNA ligase (428 aa).

This sequence belongs to the class-II aminoacyl-tRNA synthetase family. As to quaternary structure, homodimer.

The protein localises to the cytoplasm. It carries out the reaction tRNA(His) + L-histidine + ATP = L-histidyl-tRNA(His) + AMP + diphosphate + H(+). The chain is Histidine--tRNA ligase from Mesomycoplasma hyopneumoniae (strain J / ATCC 25934 / NCTC 10110) (Mycoplasma hyopneumoniae).